Here is a 438-residue protein sequence, read N- to C-terminus: tRNA-2-methylthio-N(6)-dimethylallyladenosine synthase (438 aa).

The 117-residue stretch at 4–120 (KKLYIDTVGC…VPEMVKDAEA (117 aa)) folds into the MTTase N-terminal domain. The [4Fe-4S] cluster site is built by Cys-13, Cys-49, Cys-83, Cys-158, Cys-162, and Cys-165. Residues 144-377 (GRKRVSAFVT…QAVHSRIHNE (234 aa)) enclose the Radical SAM core domain. The TRAM domain maps to 377–438 (ETYVGSTQQV…YANSLLGELL (62 aa)).

This sequence belongs to the methylthiotransferase family. MiaB subfamily. As to quaternary structure, monomer. It depends on [4Fe-4S] cluster as a cofactor.

It localises to the cytoplasm. The catalysed reaction is N(6)-dimethylallyladenosine(37) in tRNA + (sulfur carrier)-SH + AH2 + 2 S-adenosyl-L-methionine = 2-methylsulfanyl-N(6)-dimethylallyladenosine(37) in tRNA + (sulfur carrier)-H + 5'-deoxyadenosine + L-methionine + A + S-adenosyl-L-homocysteine + 2 H(+). Functionally, catalyzes the methylthiolation of N6-(dimethylallyl)adenosine (i(6)A), leading to the formation of 2-methylthio-N6-(dimethylallyl)adenosine (ms(2)i(6)A) at position 37 in tRNAs that read codons beginning with uridine. This chain is tRNA-2-methylthio-N(6)-dimethylallyladenosine synthase, found in Trichlorobacter lovleyi (strain ATCC BAA-1151 / DSM 17278 / SZ) (Geobacter lovleyi).